The chain runs to 332 residues: UPF0194 membrane protein YbhG (332 aa).

The first 16 residues, 1 to 16 (MMKKPVVIGLAVVVLA), serve as a signal peptide directing secretion. Positions 108–209 (EEIAQAAAAV…LNLQDSTLIA (102 aa)) form a coiled coil.

It belongs to the UPF0194 family.

It localises to the periplasm. The chain is UPF0194 membrane protein YbhG from Escherichia coli O127:H6 (strain E2348/69 / EPEC).